The primary structure comprises 340 residues: Ribosomal RNA small subunit methyltransferase C (340 aa).

It belongs to the methyltransferase superfamily. RsmC family. In terms of assembly, monomer.

Its subcellular location is the cytoplasm. It catalyses the reaction guanosine(1207) in 16S rRNA + S-adenosyl-L-methionine = N(2)-methylguanosine(1207) in 16S rRNA + S-adenosyl-L-homocysteine + H(+). In terms of biological role, specifically methylates the guanine in position 1207 of 16S rRNA in the 30S particle. In Vibrio vulnificus (strain CMCP6), this protein is Ribosomal RNA small subunit methyltransferase C.